The chain runs to 261 residues: Cytochrome c oxidase subunit 3 (261 aa).

Topologically, residues 1–15 are mitochondrial matrix; the sequence is MAHQAHPYHMVDPSP. Residues 16–34 form a helical membrane-spanning segment; that stretch reads WPLTGATAALLMTSGLAIW. Residues 35–40 are Mitochondrial intermembrane-facing; it reads FHFHSL. Residues 41–66 traverse the membrane as a helical segment; the sequence is LLLYLGLTLLLLTMIQWWRDIIREGT. Residues 67 to 72 lie on the Mitochondrial matrix side of the membrane; the sequence is FQGHHT. Residues 73–105 form a helical membrane-spanning segment; it reads PPVQKGLRYGMILFIVSEVFFFLGFFWAFYHSS. The Mitochondrial intermembrane portion of the chain corresponds to 106–128; sequence LAPTPELGGCWPPTGINPLDPFE. Residues 129–152 form a helical membrane-spanning segment; that stretch reads VPLLNTAVLLASGVTVTWAHHGLM. Residues 153–155 are Mitochondrial matrix-facing; that stretch reads EGN. A helical transmembrane segment spans residues 156-183; it reads RKEAIQALTLTIILGVYFTALQAMEYYE. Topologically, residues 184–190 are mitochondrial intermembrane; it reads APFTIAD. The chain crosses the membrane as a helical span at residues 191-223; that stretch reads GVYGTTFFVATGFHGLHVIIGSTFLAVCLLRQV. The Mitochondrial matrix portion of the chain corresponds to 224–232; the sequence is LYHFTSEHH. Residues 233 to 256 form a helical membrane-spanning segment; that stretch reads FGFEAAAWYWHFVDVVWLFLYVSI. Residues 257 to 261 are Mitochondrial intermembrane-facing; it reads YWWGS.

It belongs to the cytochrome c oxidase subunit 3 family. In terms of assembly, component of the cytochrome c oxidase (complex IV, CIV), a multisubunit enzyme composed of 14 subunits. The complex is composed of a catalytic core of 3 subunits MT-CO1, MT-CO2 and MT-CO3, encoded in the mitochondrial DNA, and 11 supernumerary subunits COX4I, COX5A, COX5B, COX6A, COX6B, COX6C, COX7A, COX7B, COX7C, COX8 and NDUFA4, which are encoded in the nuclear genome. The complex exists as a monomer or a dimer and forms supercomplexes (SCs) in the inner mitochondrial membrane with NADH-ubiquinone oxidoreductase (complex I, CI) and ubiquinol-cytochrome c oxidoreductase (cytochrome b-c1 complex, complex III, CIII), resulting in different assemblies (supercomplex SCI(1)III(2)IV(1) and megacomplex MCI(2)III(2)IV(2)).

The protein resides in the mitochondrion inner membrane. The catalysed reaction is 4 Fe(II)-[cytochrome c] + O2 + 8 H(+)(in) = 4 Fe(III)-[cytochrome c] + 2 H2O + 4 H(+)(out). Component of the cytochrome c oxidase, the last enzyme in the mitochondrial electron transport chain which drives oxidative phosphorylation. The respiratory chain contains 3 multisubunit complexes succinate dehydrogenase (complex II, CII), ubiquinol-cytochrome c oxidoreductase (cytochrome b-c1 complex, complex III, CIII) and cytochrome c oxidase (complex IV, CIV), that cooperate to transfer electrons derived from NADH and succinate to molecular oxygen, creating an electrochemical gradient over the inner membrane that drives transmembrane transport and the ATP synthase. Cytochrome c oxidase is the component of the respiratory chain that catalyzes the reduction of oxygen to water. Electrons originating from reduced cytochrome c in the intermembrane space (IMS) are transferred via the dinuclear copper A center (CU(A)) of subunit 2 and heme A of subunit 1 to the active site in subunit 1, a binuclear center (BNC) formed by heme A3 and copper B (CU(B)). The BNC reduces molecular oxygen to 2 water molecules using 4 electrons from cytochrome c in the IMS and 4 protons from the mitochondrial matrix. The sequence is that of Cytochrome c oxidase subunit 3 (MT-CO3) from Scyliorhinus canicula (Small-spotted catshark).